The sequence spans 358 residues: Alanine racemase (358 aa).

The Proton acceptor; specific for D-alanine role is filled by lysine 34. N6-(pyridoxal phosphate)lysine is present on lysine 34. Arginine 130 is a binding site for substrate. Residue tyrosine 254 is the Proton acceptor; specific for L-alanine of the active site. Substrate is bound at residue methionine 302.

This sequence belongs to the alanine racemase family. The cofactor is pyridoxal 5'-phosphate.

The catalysed reaction is L-alanine = D-alanine. It functions in the pathway amino-acid biosynthesis; D-alanine biosynthesis; D-alanine from L-alanine: step 1/1. Its function is as follows. Catalyzes the interconversion of L-alanine and D-alanine. May also act on other amino acids. In Stutzerimonas stutzeri (strain A1501) (Pseudomonas stutzeri), this protein is Alanine racemase (alr).